The chain runs to 199 residues: Chaperone protein TorD (199 aa).

This sequence belongs to the TorD/DmsD family. TorD subfamily.

It localises to the cytoplasm. Its function is as follows. Involved in the biogenesis of TorA. Acts on TorA before the insertion of the molybdenum cofactor and, as a result, probably favors a conformation of the apoenzyme that is competent for acquiring the cofactor. The chain is Chaperone protein TorD from Escherichia coli O127:H6 (strain E2348/69 / EPEC).